A 173-amino-acid polypeptide reads, in one-letter code: Shikimate kinase 1 (173 aa).

14–19 (GAGKST) is a binding site for ATP. Serine 18 is a binding site for Mg(2+). The substrate site is built by aspartate 36, arginine 60, and glycine 82. Residue arginine 120 coordinates ATP. Arginine 140 serves as a coordination point for substrate. ATP is bound at residue glutamine 157.

This sequence belongs to the shikimate kinase family. In terms of assembly, monomer. Mg(2+) serves as cofactor.

Its subcellular location is the cytoplasm. The enzyme catalyses shikimate + ATP = 3-phosphoshikimate + ADP + H(+). Its pathway is metabolic intermediate biosynthesis; chorismate biosynthesis; chorismate from D-erythrose 4-phosphate and phosphoenolpyruvate: step 5/7. Functionally, catalyzes the specific phosphorylation of the 3-hydroxyl group of shikimic acid using ATP as a cosubstrate. In Yersinia pseudotuberculosis serotype O:1b (strain IP 31758), this protein is Shikimate kinase 1.